Here is a 323-residue protein sequence, read N- to C-terminus: ATP synthase gamma chain (323 aa).

It belongs to the ATPase gamma chain family. As to quaternary structure, F-type ATPases have 2 components, CF(1) - the catalytic core - and CF(0) - the membrane proton channel. CF(1) has five subunits: alpha(3), beta(3), gamma(1), delta(1), epsilon(1). CF(0) has three main subunits: a, b and c.

The protein localises to the cell inner membrane. In terms of biological role, produces ATP from ADP in the presence of a proton gradient across the membrane. The gamma chain is believed to be important in regulating ATPase activity and the flow of protons through the CF(0) complex. This chain is ATP synthase gamma chain, found in Rickettsia rickettsii (strain Iowa).